The following is a 494-amino-acid chain: MQKKYVVALDQGTTSSRAIVFDHDANIVSVSQREFTQLYPNPGWVEHDPMEIWASQSSVLVEVLARAGIHSDEVAAIGITNQRETTVIWEKATGKPIYNAIVWQCRRSSEICEQLKAQGLEEYVRENTGLLLDPYFSGTKIKWILDNVPNARAQAERGELLFGTIDTWLVWKLTEGKVHVTDPTNAARTMLFNIHSLTWDNKLLEALDIPLSLLPEVKPSCSVYGTTRIAGEGSEIQVAGMAGDQQAALFGQLCVEPGMAKNTYGTGCFLLMNTGTKAVRSNHGLLTTVAVGPKGEVNYALEGSVFMGGATIQWLRDELGLIRDASDTEYFASKVADTNGVYLVPAFVGLGAPYWDPNARGALFGLTRGANRNHIIRAALESIAYQSKDLLDAMTKDSGVSLKRLKVDGGAVANDFLMQFQADITDVEVLRPSVCETTALGAAFLAGLAVGFWESVIELEHKACIDKHFIPNIDAENRGRLYAGWQDAVARTRA.

An ADP-binding site is contributed by Thr-13. ATP-binding residues include Thr-13, Thr-14, and Ser-15. Thr-13 serves as a coordination point for sn-glycerol 3-phosphate. Arg-17 serves as a coordination point for ADP. Sn-glycerol 3-phosphate contacts are provided by Arg-83, Glu-84, Tyr-135, and Asp-244. 5 residues coordinate glycerol: Arg-83, Glu-84, Tyr-135, Asp-244, and Gln-245. ADP contacts are provided by Thr-266 and Gly-309. 4 residues coordinate ATP: Thr-266, Gly-309, Gln-313, and Gly-410. 2 residues coordinate ADP: Gly-410 and Asn-414.

Belongs to the FGGY kinase family.

The enzyme catalyses glycerol + ATP = sn-glycerol 3-phosphate + ADP + H(+). Its pathway is polyol metabolism; glycerol degradation via glycerol kinase pathway; sn-glycerol 3-phosphate from glycerol: step 1/1. Its activity is regulated as follows. Inhibited by fructose 1,6-bisphosphate (FBP). Its function is as follows. Key enzyme in the regulation of glycerol uptake and metabolism. Catalyzes the phosphorylation of glycerol to yield sn-glycerol 3-phosphate. The chain is Glycerol kinase from Shewanella baltica (strain OS223).